The primary structure comprises 524 residues: Indoleacetamide hydrolase (524 aa).

Composition is skewed to basic residues over residues 1-26 and 34-54; these read MAKK…KATA and AAKK…RRPK. Residues 1–56 are disordered; that stretch reads MAKKTASKKKSVSRKVTKTSSKKATARKGAVAKAAKKSVKKAAPRKSATARRPKGP. Residues K133 and S208 each act as charge relay system in the active site. S232 functions as the Acyl-ester intermediate in the catalytic mechanism.

It belongs to the amidase family.

It functions in the pathway plant hormone metabolism; auxin biosynthesis. Hydrolyzes indole-3-acetamide (IAM) into indole-3-acetic acid (IAA). The protein is Indoleacetamide hydrolase (bam) of Bradyrhizobium diazoefficiens (strain JCM 10833 / BCRC 13528 / IAM 13628 / NBRC 14792 / USDA 110).